We begin with the raw amino-acid sequence, 209 residues long: Hydrogenase expression/formation protein HupM (209 aa).

Positions 21, 67, and 98 each coordinate Ni(2+).

Belongs to the peptidase A31 family.

In terms of biological role, not known. Could be involved in the processing of hydrogenase. The chain is Hydrogenase expression/formation protein HupM (hupM) from Azotobacter chroococcum mcd 1.